A 72-amino-acid polypeptide reads, in one-letter code: ANFDPSCTGVYDRELLGRLSRLCDDCYNVFREPKVATECRSNCFYNPVFVQCLEYLIPADLHEEYQAHVQTV.

3 disulfide bridges follow: cysteine 7–cysteine 43, cysteine 23–cysteine 39, and cysteine 26–cysteine 52. Valine 72 bears the Valine amide mark.

Its subcellular location is the secreted. Functionally, hormone found in the sinus gland of isopods and decapods which controls the blood sugar level. Has a secretagogue action over the amylase released from the midgut gland. May act as a stress hormone and may be involved in the control of molting and reproduction. In Penaeus schmitti (White shrimp), this protein is Crustacean hyperglycemic hormone.